The sequence spans 808 residues: Sucrose synthase 1 (808 aa).

The interval 277–754 is GT-B glycosyltransferase; the sequence is MVFNVVILSP…GLQRIEEKYT (478 aa).

This sequence belongs to the glycosyltransferase 1 family. Plant sucrose synthase subfamily. As to quaternary structure, homotetramer. In terms of tissue distribution, expressed in the phloem of leaves and in roots. Detected in the whole plant but more precisely confined to the vasculature in cotyledons, mature leaves and siliques.

It catalyses the reaction an NDP-alpha-D-glucose + D-fructose = a ribonucleoside 5'-diphosphate + sucrose + H(+). In terms of biological role, sucrose-cleaving enzyme that provides UDP-glucose and fructose for various metabolic pathways. The protein is Sucrose synthase 1 (SUS1) of Arabidopsis thaliana (Mouse-ear cress).